The following is a 166-amino-acid chain: Phosphopantetheine adenylyltransferase (166 aa).

Substrate is bound at residue serine 11. Residues serine 11–phenylalanine 12 and histidine 19 each bind ATP. Substrate contacts are provided by lysine 43, valine 80, and arginine 94. ATP is bound by residues glycine 95–arginine 97, glutamate 105, and valine 130–threonine 136.

This sequence belongs to the bacterial CoaD family. Homohexamer. Mg(2+) is required as a cofactor.

It localises to the cytoplasm. It catalyses the reaction (R)-4'-phosphopantetheine + ATP + H(+) = 3'-dephospho-CoA + diphosphate. The protein operates within cofactor biosynthesis; coenzyme A biosynthesis; CoA from (R)-pantothenate: step 4/5. In terms of biological role, reversibly transfers an adenylyl group from ATP to 4'-phosphopantetheine, yielding dephospho-CoA (dPCoA) and pyrophosphate. The sequence is that of Phosphopantetheine adenylyltransferase from Chelativorans sp. (strain BNC1).